A 226-amino-acid chain; its full sequence is ATP synthase F(0) complex subunit a (226 aa).

6 helical membrane passes run 6–26, 68–88, 97–117, 138–158, 164–184, and 189–209; these read FASF…IVLF, WALM…LGLL, QLSM…ITGF, IPML…ALAV, ITAG…LMSI, and ALIT…VAMI.

Belongs to the ATPase A chain family. Component of the ATP synthase complex composed at least of ATP5F1A/subunit alpha, ATP5F1B/subunit beta, ATP5MC1/subunit c (homooctomer), MT-ATP6/subunit a, MT-ATP8/subunit 8, ATP5ME/subunit e, ATP5MF/subunit f, ATP5MG/subunit g, ATP5MK/subunit k, ATP5MJ/subunit j, ATP5F1C/subunit gamma, ATP5F1D/subunit delta, ATP5F1E/subunit epsilon, ATP5PF/subunit F6, ATP5PB/subunit b, ATP5PD/subunit d, ATP5PO/subunit OSCP. ATP synthase complex consists of a soluble F(1) head domain (subunits alpha(3) and beta(3)) - the catalytic core - and a membrane F(0) domain - the membrane proton channel (subunits c, a, 8, e, f, g, k and j). These two domains are linked by a central stalk (subunits gamma, delta, and epsilon) rotating inside the F1 region and a stationary peripheral stalk (subunits F6, b, d, and OSCP). Interacts with DNAJC30; interaction is direct.

The protein localises to the mitochondrion inner membrane. The enzyme catalyses H(+)(in) = H(+)(out). Its function is as follows. Subunit a, of the mitochondrial membrane ATP synthase complex (F(1)F(0) ATP synthase or Complex V) that produces ATP from ADP in the presence of a proton gradient across the membrane which is generated by electron transport complexes of the respiratory chain. ATP synthase complex consist of a soluble F(1) head domain - the catalytic core - and a membrane F(1) domain - the membrane proton channel. These two domains are linked by a central stalk rotating inside the F(1) region and a stationary peripheral stalk. During catalysis, ATP synthesis in the catalytic domain of F(1) is coupled via a rotary mechanism of the central stalk subunits to proton translocation. With the subunit c (ATP5MC1), forms the proton-conducting channel in the F(0) domain, that contains two crucial half-channels (inlet and outlet) that facilitate proton movement from the mitochondrial intermembrane space (IMS) into the matrix. Protons are taken up via the inlet half-channel and released through the outlet half-channel, following a Grotthuss mechanism. In Bos indicus (Zebu), this protein is ATP synthase F(0) complex subunit a.